A 116-amino-acid chain; its full sequence is Helper of Tim protein 13 (116 aa).

The CHY-type; degenerate zinc finger occupies 10–94 (TVDDQSRCVH…SNLICPNCRS (85 aa)). Zn(2+) is bound by residues Cys-17, His-19, Cys-40, Cys-43, Cys-68, Cys-71, Cys-89, and Cys-92.

As to quaternary structure, interacts with the small Tim proteins TIM8, TIM9, TIM10, TIM12, and TIM13.

The protein resides in the mitochondrion intermembrane space. The protein localises to the mitochondrion membrane. Its function is as follows. Required for the assembly or recycling of the small Tim proteins in the mitochondrial intermembrane, thereby participating in the import and insertion of multi-pass transmembrane proteins into the mitochondrial inner membrane. Probably acts by facilitating the formation of disulfide bonds in small Tim proteins. This is Helper of Tim protein 13 (HOT13) from Saccharomyces cerevisiae (strain ATCC 204508 / S288c) (Baker's yeast).